Consider the following 444-residue polypeptide: ATP-dependent protease ATPase subunit HslU (444 aa).

ATP-binding positions include isoleucine 18 and 60–65 (GVGKTE). A disordered region spans residues 143–163 (WGEVENHDSHSSTRQAFRKKL). Positions 257, 322, and 394 each coordinate ATP.

This sequence belongs to the ClpX chaperone family. HslU subfamily. As to quaternary structure, a double ring-shaped homohexamer of HslV is capped on each side by a ring-shaped HslU homohexamer. The assembly of the HslU/HslV complex is dependent on binding of ATP.

The protein localises to the cytoplasm. Its function is as follows. ATPase subunit of a proteasome-like degradation complex; this subunit has chaperone activity. The binding of ATP and its subsequent hydrolysis by HslU are essential for unfolding of protein substrates subsequently hydrolyzed by HslV. HslU recognizes the N-terminal part of its protein substrates and unfolds these before they are guided to HslV for hydrolysis. The sequence is that of ATP-dependent protease ATPase subunit HslU from Haemophilus influenzae (strain 86-028NP).